A 216-amino-acid chain; its full sequence is Adenylate kinase (216 aa).

Position 10 to 15 (Gly-10 to Thr-15) interacts with ATP. The segment at Ser-30–Val-59 is NMP. Residues Thr-31, Arg-36, Lys-57–Val-59, Gly-85–Arg-88, and Gln-92 contribute to the AMP site. The tract at residues Gly-126 to Asp-163 is LID. Arg-127 contacts ATP. Zn(2+)-binding residues include Cys-130, Cys-133, Cys-150, and Cys-153. AMP contacts are provided by Arg-160 and Arg-172. Ala-200 is an ATP binding site.

The protein belongs to the adenylate kinase family. Monomer.

Its subcellular location is the cytoplasm. The enzyme catalyses AMP + ATP = 2 ADP. It participates in purine metabolism; AMP biosynthesis via salvage pathway; AMP from ADP: step 1/1. In terms of biological role, catalyzes the reversible transfer of the terminal phosphate group between ATP and AMP. Plays an important role in cellular energy homeostasis and in adenine nucleotide metabolism. This is Adenylate kinase from Allorhizobium ampelinum (strain ATCC BAA-846 / DSM 112012 / S4) (Agrobacterium vitis (strain S4)).